The sequence spans 353 residues: Uroporphyrinogen decarboxylase (353 aa).

Substrate contacts are provided by residues 25–29, Asp74, Tyr151, Ser206, and His325; that span reads RQAGR.

Belongs to the uroporphyrinogen decarboxylase family. Homodimer.

It is found in the cytoplasm. It catalyses the reaction uroporphyrinogen III + 4 H(+) = coproporphyrinogen III + 4 CO2. Its pathway is porphyrin-containing compound metabolism; protoporphyrin-IX biosynthesis; coproporphyrinogen-III from 5-aminolevulinate: step 4/4. Functionally, catalyzes the decarboxylation of four acetate groups of uroporphyrinogen-III to yield coproporphyrinogen-III. In Chloroherpeton thalassium (strain ATCC 35110 / GB-78), this protein is Uroporphyrinogen decarboxylase.